A 153-amino-acid chain; its full sequence is Bifunctional protein GAL10 (153 aa).

The segment at 1 to 153 (MSDDIFLVTG…IPIPEHCPME (153 aa)) is galactowaldenase.

This sequence in the N-terminal section; belongs to the NAD(P)-dependent epimerase/dehydratase family. In the C-terminal section; belongs to the aldose epimerase family. Requires NAD(+) as cofactor.

The catalysed reaction is UDP-alpha-D-glucose = UDP-alpha-D-galactose. It carries out the reaction alpha-D-glucose = beta-D-glucose. It participates in carbohydrate metabolism; galactose metabolism. The protein operates within carbohydrate metabolism; hexose metabolism. Functionally, mutarotase converts alpha-aldose to the beta-anomer. It is active on D-glucose, L-arabinose, D-xylose, D-galactose, maltose and lactose. This is Bifunctional protein GAL10 (GAL10) from Candida maltosa (Yeast).